A 411-amino-acid chain; its full sequence is Protein PHLOEM PROTEIN 2-LIKE A5 (411 aa).

The region spanning 20–157 (TGPQVFINFR…KWTEALFSVC (138 aa)) is the TIR domain. The active site involves Glu94.

The catalysed reaction is NAD(+) + H2O = ADP-D-ribose + nicotinamide + H(+). The sequence is that of Protein PHLOEM PROTEIN 2-LIKE A5 (PP2A5) from Arabidopsis thaliana (Mouse-ear cress).